The chain runs to 436 residues: MTEVKIKRLYTGDADFASQLDRLLAWSESEDTDIHQRVTEIIGCIRRDGDAALVELTARFDHFVVDTAAALELPRDVLEAAWQALPAEQAKALREAAERIRAYAERQKLDSWDYREADGTLLGQKITPLDRVGLYVPGGKAAYPSSVLMNAVPAKVAGVPELIMAVPAPRGELNALVLAAAYISGVDRVFRIGGAQAVAALAYGTETVPRVDKIVGPGNIYVATAKKLVFGQVGIDMVAGPSEILVISDGRTDPDWIAMDLFSQAEHDEDAQAILISPDAAHLEAVQASIERLLPGMERAEVIRTSLERRGGMILVDDLEQAAAVANRIAPEHLELSVESPEVLVESIRNAGAIFMGRYTAEALGDYCAGPNHVLPTSGTARFSSPLGVYDFQKRSSLIYCSPDGADQLGRTASLLAWGEGLGAHARSAEYRIRHH.

NAD(+)-binding residues include Tyr-135, Gln-196, and Asn-219. Substrate contacts are provided by Ser-242, Gln-264, and His-267. The Zn(2+) site is built by Gln-264 and His-267. Residues Glu-332 and His-333 each act as proton acceptor in the active site. Substrate-binding residues include His-333, Asp-366, Glu-420, and His-425. Residue Asp-366 participates in Zn(2+) binding. His-425 serves as a coordination point for Zn(2+).

Belongs to the histidinol dehydrogenase family. The cofactor is Zn(2+).

It catalyses the reaction L-histidinol + 2 NAD(+) + H2O = L-histidine + 2 NADH + 3 H(+). Its pathway is amino-acid biosynthesis; L-histidine biosynthesis; L-histidine from 5-phospho-alpha-D-ribose 1-diphosphate: step 9/9. In terms of biological role, catalyzes the sequential NAD-dependent oxidations of L-histidinol to L-histidinaldehyde and then to L-histidine. This is Histidinol dehydrogenase from Methylococcus capsulatus (strain ATCC 33009 / NCIMB 11132 / Bath).